A 431-amino-acid chain; its full sequence is Argininosuccinate lyase (431 aa).

Belongs to the lyase 1 family. Argininosuccinate lyase subfamily.

It is found in the cytoplasm. The catalysed reaction is 2-(N(omega)-L-arginino)succinate = fumarate + L-arginine. The protein operates within amino-acid biosynthesis; L-arginine biosynthesis; L-arginine from L-ornithine and carbamoyl phosphate: step 3/3. The polypeptide is Argininosuccinate lyase (Xanthomonas campestris pv. campestris (strain B100)).